A 655-amino-acid polypeptide reads, in one-letter code: Tetratricopeptide repeat protein 30 homolog (655 aa).

TPR repeat units lie at residues 10 to 43 (EGHVTRTIYNLIKDKRYEDVIECITSFGEAANTR), 44 to 76 (AGLSTLGHCYYHAQKYEEAATCYEQLCQLAPKE), 143 to 176 (ADTLNDEGCLLFQADQHEAAVQRFQAALQVGGFN), 178 to 210 (LVAYNVALAHFQKKQRAQALDYTSEIVERGMRN), 385 to 418 (LAAKVQEVRATNEQQALRDALKDYEQALELYLPV), 450 to 484 (SIWRLNAGHVLFMQGDKYNEAAAFYEPIVRQHSDD), and 534 to 567 (CIVNLVVGTLYCAKSNYEFGLSRIAHALESGSGN).

This sequence belongs to the TTC30/dfy-1/fleer family.

The protein localises to the cell projection. Its subcellular location is the cilium. Required for polyglutamylation of axonemal tubulin in sensory cilia. Plays a role in anterograde intraflagellar transport (IFT), the process by which cilia precursors are transported from the base of the cilium to the site of their incorporation at the tip. This Drosophila melanogaster (Fruit fly) protein is Tetratricopeptide repeat protein 30 homolog.